Reading from the N-terminus, the 370-residue chain is Chaperone protein DnaJ (370 aa).

Positions 4 to 68 constitute a J domain; it reads DYYQVLGVSK…QKRAAYDRFG (65 aa). Residues 133–211 form a CR-type zinc finger; sequence GIEKNISFSS…CHGMGRYHKQ (79 aa). 8 residues coordinate Zn(2+): C146, C149, C163, C166, C185, C188, C199, and C202. CXXCXGXG motif repeat units follow at residues 146–153, 163–170, 185–192, and 199–206; these read CDTCHGTG, CDACGGVG, CHKCQGNG, and CKKCHGMG.

It belongs to the DnaJ family. In terms of assembly, homodimer. Zn(2+) serves as cofactor.

It localises to the cytoplasm. Its function is as follows. Participates actively in the response to hyperosmotic and heat shock by preventing the aggregation of stress-denatured proteins and by disaggregating proteins, also in an autonomous, DnaK-independent fashion. Unfolded proteins bind initially to DnaJ; upon interaction with the DnaJ-bound protein, DnaK hydrolyzes its bound ATP, resulting in the formation of a stable complex. GrpE releases ADP from DnaK; ATP binding to DnaK triggers the release of the substrate protein, thus completing the reaction cycle. Several rounds of ATP-dependent interactions between DnaJ, DnaK and GrpE are required for fully efficient folding. Also involved, together with DnaK and GrpE, in the DNA replication of plasmids through activation of initiation proteins. The chain is Chaperone protein DnaJ from Rickettsia prowazekii (strain Madrid E).